The primary structure comprises 304 residues: MRMIEQAPKTYCGFIAIVGRPNVGKSTLLNKILGQKISITSRKAQTTRHRIVGIQTEEQYQAIYVDTPGLHIEEKRAINRLMNRAASSAIGDVDLIIFVVEGTKWTDDDEMVLNKLRTAKAPVVLAINKVDNIKEKDELLPHITALSQKFDFAEILPISAQRGKNVHILQKIVRKSLREGVHHFPEEYVTDRSQRFMASEIIREKLMRFTGEELPYSVTVEIEQFKLNERGTYEINGLILVEREGQKKMVIGAKGQKIKTIGIEARADMERLFDNKVHLELWVKVKAGWADDERALRSLGYMDE.

Residues 11-179 (YCGFIAIVGR…QKIVRKSLRE (169 aa)) form the Era-type G domain. Residues 19–26 (GRPNVGKS) form a G1 region. 19-26 (GRPNVGKS) is a GTP binding site. Residues 45 to 49 (QTTRH) form a G2 region. Residues 66–69 (DTPG) form a G3 region. Residues 66-70 (DTPGL) and 128-131 (NKVD) contribute to the GTP site. A G4 region spans residues 128–131 (NKVD). Residues 158 to 160 (ISA) are G5. The region spanning 210–287 (TGEELPYSVT…HLELWVKVKA (78 aa)) is the KH type-2 domain.

The protein belongs to the TRAFAC class TrmE-Era-EngA-EngB-Septin-like GTPase superfamily. Era GTPase family. In terms of assembly, monomer.

It localises to the cytoplasm. Its subcellular location is the cell inner membrane. Functionally, an essential GTPase that binds both GDP and GTP, with rapid nucleotide exchange. Plays a role in 16S rRNA processing and 30S ribosomal subunit biogenesis and possibly also in cell cycle regulation and energy metabolism. The polypeptide is GTPase Era (Haemophilus ducreyi (strain 35000HP / ATCC 700724)).